We begin with the raw amino-acid sequence, 218 residues long: Small ribosomal subunit protein uS3c (218 aa).

One can recognise a KH type-2 domain in the interval Val-47–Glu-118.

This sequence belongs to the universal ribosomal protein uS3 family. Part of the 30S ribosomal subunit.

The protein localises to the plastid. It is found in the chloroplast. In Lactuca sativa (Garden lettuce), this protein is Small ribosomal subunit protein uS3c (rps3).